The following is a 140-amino-acid chain: Large ribosomal subunit protein bL17 (140 aa).

Belongs to the bacterial ribosomal protein bL17 family. In terms of assembly, part of the 50S ribosomal subunit. Contacts protein L32.

The sequence is that of Large ribosomal subunit protein bL17 from Rhizorhabdus wittichii (strain DSM 6014 / CCUG 31198 / JCM 15750 / NBRC 105917 / EY 4224 / RW1) (Sphingomonas wittichii).